Reading from the N-terminus, the 284-residue chain is D-tagatose-1,6-bisphosphate aldolase subunit GatY (284 aa).

Residue Asp82 is the Proton donor of the active site. The Zn(2+) site is built by His83 and His180. A dihydroxyacetone phosphate-binding site is contributed by Gly181. Residue His208 participates in Zn(2+) binding. Residues 209 to 211 (GAS) and 230 to 233 (NVAT) contribute to the dihydroxyacetone phosphate site.

The protein belongs to the class II fructose-bisphosphate aldolase family. TagBP aldolase GatY subfamily. In terms of assembly, forms a complex with GatZ. It depends on Zn(2+) as a cofactor.

It catalyses the reaction D-tagatofuranose 1,6-bisphosphate = D-glyceraldehyde 3-phosphate + dihydroxyacetone phosphate. Its pathway is carbohydrate metabolism; D-tagatose 6-phosphate degradation; D-glyceraldehyde 3-phosphate and glycerone phosphate from D-tagatose 6-phosphate: step 2/2. Its function is as follows. Catalytic subunit of the tagatose-1,6-bisphosphate aldolase GatYZ, which catalyzes the reversible aldol condensation of dihydroxyacetone phosphate (DHAP or glycerone-phosphate) with glyceraldehyde 3-phosphate (G3P) to produce tagatose 1,6-bisphosphate (TBP). Requires GatZ subunit for full activity and stability. Is involved in the catabolism of galactitol. This chain is D-tagatose-1,6-bisphosphate aldolase subunit GatY, found in Shigella flexneri serotype 5b (strain 8401).